The sequence spans 1057 residues: Carbamoyl phosphate synthase large chain (1057 aa).

Residues 1–401 (MPKRNDIKTI…SLLKAIRSLE (401 aa)) are carboxyphosphate synthetic domain. ATP-binding residues include R129, R169, G175, G176, K208, I210, E215, G241, I242, H243, Q284, and E298. The region spanning 133-327 (RTLMNDLNVP…IAKLAAKIAV (195 aa)) is the ATP-grasp 1 domain. Mg(2+) contacts are provided by Q284, E298, and N300. Mn(2+) contacts are provided by Q284, E298, and N300. The oligomerization domain stretch occupies residues 402 to 546 (YGVHHLGLPN…YGTYETENES (145 aa)). A carbamoyl phosphate synthetic domain region spans residues 547–929 (IVTDKEKILV…ALFKGLTGSG (383 aa)). Residues 671-861 (EALLRKINVP…MAQLAMRAII (191 aa)) form the ATP-grasp 2 domain. R707, R746, L748, E752, G777, V778, H779, S780, Q820, and E832 together coordinate ATP. Mg(2+) contacts are provided by Q820, E832, and N834. Residues Q820, E832, and N834 each coordinate Mn(2+). Residues 930-1057 (VEVKDHGTVL…ESMTFTMRQM (128 aa)) form the MGS-like domain. The tract at residues 930 to 1057 (VEVKDHGTVL…ESMTFTMRQM (128 aa)) is allosteric domain.

Belongs to the CarB family. In terms of assembly, composed of two chains; the small (or glutamine) chain promotes the hydrolysis of glutamine to ammonia, which is used by the large (or ammonia) chain to synthesize carbamoyl phosphate. Tetramer of heterodimers (alpha,beta)4. Requires Mg(2+) as cofactor. Mn(2+) is required as a cofactor.

It catalyses the reaction hydrogencarbonate + L-glutamine + 2 ATP + H2O = carbamoyl phosphate + L-glutamate + 2 ADP + phosphate + 2 H(+). The catalysed reaction is hydrogencarbonate + NH4(+) + 2 ATP = carbamoyl phosphate + 2 ADP + phosphate + 2 H(+). The protein operates within amino-acid biosynthesis; L-arginine biosynthesis; carbamoyl phosphate from bicarbonate: step 1/1. Its pathway is pyrimidine metabolism; UMP biosynthesis via de novo pathway; (S)-dihydroorotate from bicarbonate: step 1/3. Functionally, large subunit of the glutamine-dependent carbamoyl phosphate synthetase (CPSase). CPSase catalyzes the formation of carbamoyl phosphate from the ammonia moiety of glutamine, carbonate, and phosphate donated by ATP, constituting the first step of 2 biosynthetic pathways, one leading to arginine and/or urea and the other to pyrimidine nucleotides. The large subunit (synthetase) binds the substrates ammonia (free or transferred from glutamine from the small subunit), hydrogencarbonate and ATP and carries out an ATP-coupled ligase reaction, activating hydrogencarbonate by forming carboxy phosphate which reacts with ammonia to form carbamoyl phosphate. This chain is Carbamoyl phosphate synthase large chain, found in Staphylococcus aureus (strain USA300 / TCH1516).